Reading from the N-terminus, the 566-residue chain is Type IV pilus assembly ATPase PilB (566 aa).

Glycine 326–threonine 333 serves as a coordination point for ATP. 4 residues coordinate Zn(2+): cysteine 459, cysteine 462, cysteine 494, and cysteine 497.

Belongs to the GSP E family. Homohexamer. Interacts with PilC. Interacts with FimX; this interaction positively regulates T4P assembly and twitching motility by promoting the activity of the PilB ATPase.

It localises to the cytoplasm. Functionally, ATPase component of the type IV pilus (T4P) that plays a role in surface and host cell adhesion, colonization, biofilm maturation, virulence, and twitching, a form of surface-associated motility facilitated by cycles of extension, adhesion, and retraction of T4P fibers. Acts as a molecular motor to provide the energy that is required for biogenesis of the pilus and the extrusion of substrates generated in the cytoplasm. PilB ATPase activity is also essential for T4P extension while antagonist PilT ATPase activity is required for T4P retraction. The polypeptide is Type IV pilus assembly ATPase PilB (pilB) (Pseudomonas aeruginosa (strain ATCC 15692 / DSM 22644 / CIP 104116 / JCM 14847 / LMG 12228 / 1C / PRS 101 / PAO1)).